Here is a 464-residue protein sequence, read N- to C-terminus: Putative protein TIC 214 C-terminal part (464 aa).

The protein belongs to the TIC214 family. As to quaternary structure, part of the Tic complex.

It localises to the plastid. Its subcellular location is the chloroplast. In terms of biological role, involved in protein precursor import into chloroplasts. May be part of an intermediate translocation complex acting as a protein-conducting channel at the inner envelope. The protein is Putative protein TIC 214 C-terminal part of Marchantia polymorpha (Common liverwort).